Reading from the N-terminus, the 419-residue chain is Serine hydroxymethyltransferase (419 aa).

Residues leucine 120 and 124 to 126 (GHL) contribute to the (6S)-5,6,7,8-tetrahydrofolate site. Residue lysine 229 is modified to N6-(pyridoxal phosphate)lysine.

It belongs to the SHMT family. In terms of assembly, homodimer. The cofactor is pyridoxal 5'-phosphate.

Its subcellular location is the cytoplasm. The enzyme catalyses (6R)-5,10-methylene-5,6,7,8-tetrahydrofolate + glycine + H2O = (6S)-5,6,7,8-tetrahydrofolate + L-serine. The protein operates within one-carbon metabolism; tetrahydrofolate interconversion. Its pathway is amino-acid biosynthesis; glycine biosynthesis; glycine from L-serine: step 1/1. Its function is as follows. Catalyzes the reversible interconversion of serine and glycine with tetrahydrofolate (THF) serving as the one-carbon carrier. This reaction serves as the major source of one-carbon groups required for the biosynthesis of purines, thymidylate, methionine, and other important biomolecules. Also exhibits THF-independent aldolase activity toward beta-hydroxyamino acids, producing glycine and aldehydes, via a retro-aldol mechanism. This is Serine hydroxymethyltransferase from Herpetosiphon aurantiacus (strain ATCC 23779 / DSM 785 / 114-95).